The sequence spans 193 residues: tRNA(Phe) 7-((3-amino-3-carboxypropyl)-4-demethylwyosine(37)-N(4))-methyltransferase (193 aa).

It belongs to the TYW3 family.

It carries out the reaction 4-demethyl-7-[(3S)-3-amino-3-carboxypropyl]wyosine(37) in tRNA(Phe) + S-adenosyl-L-methionine = 7-[(3S)-3-amino-3-carboxypropyl]wyosine(37) in tRNA(Phe) + S-adenosyl-L-homocysteine + H(+). In terms of biological role, S-adenosyl-L-methionine-dependent methyltransferase that acts as a component of the wyosine derivatives biosynthesis pathway. Probably methylates N-4 position of wybutosine-86 to produce wybutosine-72. The polypeptide is tRNA(Phe) 7-((3-amino-3-carboxypropyl)-4-demethylwyosine(37)-N(4))-methyltransferase (Methanocaldococcus jannaschii (strain ATCC 43067 / DSM 2661 / JAL-1 / JCM 10045 / NBRC 100440) (Methanococcus jannaschii)).